The chain runs to 120 residues: MILKEIAVYEETLNKHLPNETRMVLHYKNVEATENEDKITVRISNDLLVYKWVELGGVSKGTYKMKMTSLEDETSEVNVKIERIQMNSDRDLAVEIEFNVLNPFQSVVGVPGIHSFSIKG.

The polypeptide is SPbeta prophage-derived uncharacterized protein YosG (yosG) (Bacillus subtilis (strain 168)).